The primary structure comprises 337 residues: Probable deoxyhypusine synthase (337 aa).

The active-site Nucleophile is Lys-308.

The protein belongs to the deoxyhypusine synthase family. NAD(+) is required as a cofactor.

It carries out the reaction [eIF5A protein]-L-lysine + spermidine = [eIF5A protein]-deoxyhypusine + propane-1,3-diamine. Its pathway is protein modification; eIF5A hypusination. In terms of biological role, catalyzes the NAD-dependent oxidative cleavage of spermidine and the subsequent transfer of the butylamine moiety of spermidine to the epsilon-amino group of a specific lysine residue of the eIF-5A precursor protein to form the intermediate deoxyhypusine residue. In Thermococcus kodakarensis (strain ATCC BAA-918 / JCM 12380 / KOD1) (Pyrococcus kodakaraensis (strain KOD1)), this protein is Probable deoxyhypusine synthase.